Reading from the N-terminus, the 352-residue chain is Rhodopsin (352 aa).

Residues 1–36 are Extracellular-facing; the sequence is MNGTEGPDFYIPFSNKTGVVRSPFEYPQYYLAEPWK. 2 N-linked (GlcNAc...) asparagine glycosylation sites follow: asparagine 2 and asparagine 15. A helical transmembrane segment spans residues 37 to 61; sequence YSALAAYMFMLIILGFPINFLTLYV. Over 62–73 the chain is Cytoplasmic; that stretch reads TVQHKKLRSPLN. Residues 74–96 form a helical membrane-spanning segment; the sequence is YILLNLAVADLFMVLGGFTTTLY. The Extracellular portion of the chain corresponds to 97–110; it reads TSMNGYFVFGVTGC. The cysteines at positions 110 and 187 are disulfide-linked. The chain crosses the membrane as a helical span at residues 111 to 133; sequence YFEGFFATLGGEVALWCLVVLAI. Residues 134-136 carry the 'Ionic lock' involved in activated form stabilization motif; sequence ERY. Residues 134 to 152 are Cytoplasmic-facing; it reads ERYIVVCKPMSNFRFGENH. Residues 153–173 form a helical membrane-spanning segment; that stretch reads AIMGVVFTWIMALTCAAPPLV. Residues 174–202 lie on the Extracellular side of the membrane; that stretch reads GWSRYIPEGMQCSCGVDYYTLKPEVNNES. The helical transmembrane segment at 203–224 threads the bilayer; it reads FVIYMFVVHFAIPLAVIFFCYG. Residues 225–252 lie on the Cytoplasmic side of the membrane; it reads RLVCTVKEAAAQQQESATTQKAEKEVTR. Residues 253 to 274 traverse the membrane as a helical segment; that stretch reads MVIIMVVSFLICWVPYASVAFY. Residues 275–286 are Extracellular-facing; the sequence is IFSNQGSDFGPV. A helical membrane pass occupies residues 287–308; the sequence is FMTIPAFFAKSSAIYNPVIYIV. An N6-(retinylidene)lysine modification is found at lysine 296. Residues 309–352 lie on the Cytoplasmic side of the membrane; sequence MNKQFRNCMITTLCCGKNPLGDDETATGSKTETSSVSTSQVSPA. 2 S-palmitoyl cysteine lipidation sites follow: cysteine 322 and cysteine 323. Residues 332-352 form a disordered region; sequence ETATGSKTETSSVSTSQVSPA. Residues 335–352 show a composition bias toward low complexity; the sequence is TGSKTETSSVSTSQVSPA.

Belongs to the G-protein coupled receptor 1 family. Opsin subfamily. Contains one covalently linked retinal chromophore. Upon light absorption, the covalently bound 11-cis-retinal is converted to all-trans-retinal. After hydrolysis of the Schiff base and release of the covalently bound all-trans-retinal, active rhodopsin is regenerated by binding of a fresh molecule of 11-cis-retinal. In terms of tissue distribution, expressed in rod-shaped photoreceptor cells in the retina that mediate vision in dim ligh (at protein level).

Its subcellular location is the membrane. The protein resides in the cell projection. It localises to the cilium. It is found in the photoreceptor outer segment. In terms of biological role, photoreceptor required for image-forming vision at low light intensity. Required for photoreceptor cell viability after birth. Light-induced isomerization of 11-cis to all-trans retinal triggers a conformational change that activates signaling via G-proteins. Subsequent receptor phosphorylation mediates displacement of the bound G-protein alpha subunit by arrestin and terminates signaling. The sequence is that of Rhodopsin (RHO) from Alligator mississippiensis (American alligator).